The primary structure comprises 291 residues: 4-hydroxy-tetrahydrodipicolinate synthase (291 aa).

T42 contributes to the pyruvate binding site. Y129 serves as the catalytic Proton donor/acceptor. The active-site Schiff-base intermediate with substrate is the K157. I198 contributes to the pyruvate binding site.

This sequence belongs to the DapA family. In terms of assembly, homotetramer; dimer of dimers.

The protein localises to the cytoplasm. The enzyme catalyses L-aspartate 4-semialdehyde + pyruvate = (2S,4S)-4-hydroxy-2,3,4,5-tetrahydrodipicolinate + H2O + H(+). Its pathway is amino-acid biosynthesis; L-lysine biosynthesis via DAP pathway; (S)-tetrahydrodipicolinate from L-aspartate: step 3/4. Its function is as follows. Catalyzes the condensation of (S)-aspartate-beta-semialdehyde [(S)-ASA] and pyruvate to 4-hydroxy-tetrahydrodipicolinate (HTPA). The polypeptide is 4-hydroxy-tetrahydrodipicolinate synthase (Chlamydia pneumoniae (Chlamydophila pneumoniae)).